Here is a 119-residue protein sequence, read N- to C-terminus: Protein yippee-like 3 (119 aa).

The 98-residue stretch at arginine 19 to asparagine 116 folds into the Yippee domain. Positions 23, 26, 79, and 82 each coordinate Zn(2+).

This sequence belongs to the yippee family. Post-translationally, probably ubiquitinated leading to its degradation by the proteasome.

Its subcellular location is the nucleus. The protein resides in the nucleolus. In terms of biological role, involved in proliferation and apoptosis in myeloid precursor cells. In Bos taurus (Bovine), this protein is Protein yippee-like 3 (YPEL3).